A 1220-amino-acid polypeptide reads, in one-letter code: Polycomb protein Sfmbt (1220 aa).

The FCS-type zinc finger occupies 322–357; sequence PIQKDGMAVCKRCGAIGVKHTFYTKSRRFCSMACAR. 4 residues coordinate Zn(2+): Cys331, Cys334, Cys351, and Cys355. Disordered stretches follow at residues 371–399 and 464–483; these read GDQATTSSPDPGAGSESADLPGDQQQSQS and DATAPGSTEEGASTPNSYLS. Polar residues predominate over residues 473–482; that stretch reads EGASTPNSYL. 4 MBT repeats span residues 536-647, 655-753, 761-871, and 879-975; these read YDWL…LIPP, KDWK…LAAP, LAGR…VTPP, and FTWE…LEGP. 2 disordered regions span residues 976–1024 and 1050–1092; these read PRVA…IALK and NNQP…AGSG. Residues 991–1000 show a composition bias toward basic residues; sequence KIQRKRKPKK. Positions 1052–1068 are enriched in acidic residues; the sequence is QPEEEGDEEDPDADGDG. Residues 1071–1082 show a composition bias toward polar residues; it reads STSHISEQSTTQ. Over residues 1083 to 1092 the composition is skewed to low complexity; sequence SSSDLIAGSG. Residues 1140 to 1203 form the SAM domain; the sequence is WNVYDVSQFL…SDLIAQLKCK (64 aa).

Interacts with pho as a component of the pho-repressive complex (PhoRC).

It is found in the nucleus. In terms of biological role, polycomb group (PcG) protein that binds to the Polycomb response elements (PREs) found in the regulatory regions of many genes. PcG proteins act by forming multiprotein complexes, which are required to maintain the transcriptionally repressive state of homeotic genes throughout development. PcG proteins are not required to initiate repression, but to maintain it during later stages of development. They probably act via the methylation of histones, rendering chromatin heritably changed in its expressibility. Necessary but not sufficient to recruit a functional PcG repressive complex that represses target genes, suggesting that the recruitment of the distinct PRC1 complex is also required to allow a subsequent repression. The polypeptide is Polycomb protein Sfmbt (Drosophila melanogaster (Fruit fly)).